Here is a 322-residue protein sequence, read N- to C-terminus: Cytochrome c biogenesis protein CcsA (322 aa).

A run of 8 helical transmembrane segments spans residues 9-29 (ILTH…LITL), 44-64 (GMIT…IFLG), 71-91 (LYES…VPYF), 97-117 (FLSA…TSGL), 143-163 (MILG…FLVI), 225-245 (IISI…VWAN), 254-274 (WDPK…YFHI), and 286-306 (AIVA…VNLL).

This sequence belongs to the CcmF/CycK/Ccl1/NrfE/CcsA family. As to quaternary structure, may interact with Ccs1.

The protein resides in the plastid. It localises to the chloroplast thylakoid membrane. Its function is as follows. Required during biogenesis of c-type cytochromes (cytochrome c6 and cytochrome f) at the step of heme attachment. The protein is Cytochrome c biogenesis protein CcsA of Manihot esculenta (Cassava).